Consider the following 231-residue polypeptide: NADH-ubiquinone oxidoreductase chain 4 (231 aa).

Transmembrane regions (helical) follow at residues 1–21 (PIAG…YGII), 34–54 (MFIP…LTCL), 63–85 (IAYS…TPWG), 89–111 (AMAL…NTTY), 128–148 (ILPM…AMPP), and 169–189 (TIIM…HMFL).

This sequence belongs to the complex I subunit 4 family.

The protein resides in the mitochondrion membrane. It catalyses the reaction a ubiquinone + NADH + 5 H(+)(in) = a ubiquinol + NAD(+) + 4 H(+)(out). Core subunit of the mitochondrial membrane respiratory chain NADH dehydrogenase (Complex I) that is believed to belong to the minimal assembly required for catalysis. Complex I functions in the transfer of electrons from NADH to the respiratory chain. The immediate electron acceptor for the enzyme is believed to be ubiquinone. This is NADH-ubiquinone oxidoreductase chain 4 (MT-ND4) from Lachesis muta muta (Bushmaster).